The sequence spans 624 residues: Sulfite reductase [ferredoxin] (624 aa).

The 3'-(S-cysteinyl)-tyrosine (Tyr-Cys) cross-link spans Y52–C137. [4Fe-4S] cluster contacts are provided by C446, C452, C491, and C495. Position 495 (C495) interacts with siroheme.

This sequence belongs to the nitrite and sulfite reductase 4Fe-4S domain family. As to quaternary structure, monomer. Requires siroheme as cofactor. The cofactor is [4Fe-4S] cluster.

The catalysed reaction is hydrogen sulfide + 6 oxidized [2Fe-2S]-[ferredoxin] + 3 H2O = sulfite + 6 reduced [2Fe-2S]-[ferredoxin] + 7 H(+). Functionally, catalyzes the reduction of sulfite to sulfide, a step in the biosynthesis of sulfur-containing amino acids and cofactors. The protein is Sulfite reductase [ferredoxin] (sir) of Synechococcus elongatus (strain ATCC 33912 / PCC 7942 / FACHB-805) (Anacystis nidulans R2).